An 817-amino-acid polypeptide reads, in one-letter code: LisH domain-containing protein ARMC9 (817 aa).

The LisH domain maps to histidine 7 to glycine 39. The stretch at glycine 204–lysine 230 forms a coiled coil. Serine 583 bears the Phosphoserine mark. Disordered regions lie at residues arginine 637–glycine 659 and cysteine 761–lysine 817. Polar residues predominate over residues valine 765–glutamine 774. A compositionally biased stretch (low complexity) spans proline 793–arginine 807. Over residues glycine 808–lysine 817 the composition is skewed to polar residues.

In terms of assembly, interacts with TOGARAM1, CCDC66, CEP104, CSPP1 and CEP290. Interacts with NDUFAF2.

It is found in the cytoplasm. Its subcellular location is the cytoskeleton. The protein resides in the cilium basal body. It localises to the cell projection. The protein localises to the cilium. It is found in the microtubule organizing center. Its subcellular location is the centrosome. The protein resides in the centriole. Functionally, involved in ciliogenesis. It is required for appropriate acetylation and polyglutamylation of ciliary microtubules, and regulation of cilium length. Acts as a positive regulator of hedgehog (Hh) signaling. May participate in the trafficking and/or retention of GLI2 and GLI3 proteins at the ciliary tip. This chain is LisH domain-containing protein ARMC9, found in Mus musculus (Mouse).